The primary structure comprises 445 residues: NADH-quinone oxidoreductase subunit F (445 aa).

61 to 70 (GRGGAGFSTG) contacts NAD(+). Residue 174-221 (GAGRYICGEETALINSLEGRRANPRSKPPFPATSGAWGKPTCVNNVET) participates in FMN binding. The [4Fe-4S] cluster site is built by C351, C354, C357, and C398.

It belongs to the complex I 51 kDa subunit family. In terms of assembly, composed of 13 different subunits. Subunits NuoCD, E, F, and G constitute the peripheral sector of the complex. The cofactor is FMN. It depends on [4Fe-4S] cluster as a cofactor.

The enzyme catalyses a quinone + NADH + 5 H(+)(in) = a quinol + NAD(+) + 4 H(+)(out). Functionally, NDH-1 shuttles electrons from NADH, via FMN and iron-sulfur (Fe-S) centers, to quinones in the respiratory chain. The immediate electron acceptor for the enzyme in this species is believed to be ubiquinone. Couples the redox reaction to proton translocation (for every two electrons transferred, four hydrogen ions are translocated across the cytoplasmic membrane), and thus conserves the redox energy in a proton gradient. In Escherichia coli (strain K12), this protein is NADH-quinone oxidoreductase subunit F (nuoF).